We begin with the raw amino-acid sequence, 66 residues long: Phylloseptin-S6 (66 aa).

The first 22 residues, 1-22, serve as a signal peptide directing secretion; that stretch reads MAFLKKSLFLVLFLGLVSLSIC. Positions 23 to 46 are excised as a propeptide; that stretch reads EEEKRETEEEEHDQEEDDKSEEKR. Residues 25-44 form a disordered region; that stretch reads EKRETEEEEHDQEEDDKSEE. A compositionally biased stretch (acidic residues) spans 30 to 41; it reads EEEEHDQEEDDK. Leucine 65 is modified (leucine amide).

The protein belongs to the frog skin active peptide (FSAP) family. Phylloseptin subfamily. In terms of tissue distribution, expressed by the skin glands.

It localises to the secreted. The protein resides in the target cell membrane. Its function is as follows. Antimicrobial peptide with high activity against Gram-positive bacteria, low activity against Gram-negative bacteria, and moderate activity against fungi. Acts by causing bacterial membrane disruption inducing leakage of the intracellular content followed by cell death. It adopts an alpha-helical amphipathic structure in membrane environments. Also shows highly potent antiparasitic activity against Leishmania species. Shows moderate hemolytic activity on human erythrocytes. Is also active on human monocytes. This is Phylloseptin-S6 from Phyllomedusa sauvagei (Sauvage's leaf frog).